Reading from the N-terminus, the 572-residue chain is BOS complex subunit ncln (572 aa).

The N-terminal stretch at 1–35 is a signal peptide; that stretch reads MFEEAGEVLENMLKVSFPLSLVLFLVLVCPLRAEA. Over 36-530 the chain is Extracellular; the sequence is AHEFSVYRMQ…TMNAYRVKPA (495 aa). 3 N-linked (GlcNAc...) asparagine glycosylation sites follow: asparagine 108, asparagine 234, and asparagine 436. A helical transmembrane segment spans residues 531 to 551; sequence IFDLLLAVCIASYLGVLYLAI. The Cytoplasmic segment spans residues 552-572; sequence QNFGLLYGFLRRVTAPRVKQH.

It belongs to the nicastrin family. Component of the multi-pass translocon (MPT) complex.

Its subcellular location is the endoplasmic reticulum membrane. Its function is as follows. Component of the multi-pass translocon (MPT) complex that mediates insertion of multi-pass membrane proteins into the lipid bilayer of membranes. The MPT complex takes over after the SEC61 complex: following membrane insertion of the first few transmembrane segments of proteins by the SEC61 complex, the MPT complex occludes the lateral gate of the SEC61 complex to promote insertion of subsequent transmembrane regions. Antagonizes Nodal signaling and subsequent organization of axial structures during mesodermal patterning. Ectopic expression results in cyclopia, due to a defect in mesendoderm patterning. In Danio rerio (Zebrafish), this protein is BOS complex subunit ncln (ncln).